A 243-amino-acid polypeptide reads, in one-letter code: Outer membrane protein A (243 aa).

A run of 5 beta stranded transmembrane segments spans residues 1-8 (LTAKLGYP), 13-21 (LDIYTRLGG), 48-57 (PVFAGGVEWA), 62-69 (IATRLEYQ), and 88-96 (LLSLGVSYR). Tandem repeats lie at residues 107–108 (AP), 109–110 (AP), 111–112 (AP), and 113–114 (AP). The tract at residues 107–114 (APAPAPAP) is 4 X 2 AA tandem repeats of A-P. The region spanning 116–243 (VQTKHFTLKS…RRVEIEVKGI (128 aa)) is the OmpA-like domain. The cysteines at positions 217 and 229 are disulfide-linked.

It belongs to the outer membrane OOP (TC 1.B.6) superfamily. OmpA family. As to quaternary structure, monomer and homodimer.

Its subcellular location is the cell outer membrane. With TolR probably plays a role in maintaining the position of the peptidoglycan cell wall in the periplasm. Acts as a porin with low permeability that allows slow penetration of small solutes; an internal gate slows down solute passage. In terms of biological role, required for conjugation with F-type plasmids; probably serves as the mating receptor on recipient cells. This Escherichia fergusonii protein is Outer membrane protein A.